The primary structure comprises 493 residues: High affinity nitrate transporter 2.7 (493 aa).

Positions 1–19 are enriched in polar residues; sequence MEPSQRNTKPPSFSDSTIP. A disordered region spans residues 1–20; it reads MEPSQRNTKPPSFSDSTIPV. The next 12 helical transmembrane spans lie at 46–66, 70–90, 113–133, 136–156, 174–194, 202–222, 257–277, 299–319, 341–361, 368–388, 400–420, and 431–451; these read WLSL…VPVI, LNLS…GSIF, FLTA…SFIL, FFVG…SSMF, VGAG…AEFL, VSFV…LLYG, FVEI…ALLY, FGVN…SNIA, LWGL…LGRV, ILVM…VFGV, VAGI…FLLF, and ISLM…IYFP.

It belongs to the major facilitator superfamily. Nitrate/nitrite porter (TC 2.A.1.8) family. Expressed in seeds, leaves and shoots. Lower expression in roots.

The protein resides in the vacuole membrane. Involved in high-affinity nitrate transport. Controls nitrate content in seeds. The chain is High affinity nitrate transporter 2.7 (NRT2.7) from Arabidopsis thaliana (Mouse-ear cress).